The following is a 273-amino-acid chain: tRNA pseudouridine synthase B (273 aa).

The active-site Nucleophile is Asp38.

This sequence belongs to the pseudouridine synthase TruB family. Type 1 subfamily.

It catalyses the reaction uridine(55) in tRNA = pseudouridine(55) in tRNA. Responsible for synthesis of pseudouridine from uracil-55 in the psi GC loop of transfer RNAs. This chain is tRNA pseudouridine synthase B, found in Campylobacter concisus (strain 13826).